A 385-amino-acid chain; its full sequence is Glutamate 5-kinase (385 aa).

Lysine 18 provides a ligand contact to ATP. Positions 57, 144, and 156 each coordinate substrate. 218-224 (TGGMKSK) contacts ATP. The PUA domain maps to 283–361 (RGVLSIDAGA…SRIEQVLGHK (79 aa)).

The protein belongs to the glutamate 5-kinase family.

The protein resides in the cytoplasm. It carries out the reaction L-glutamate + ATP = L-glutamyl 5-phosphate + ADP. It functions in the pathway amino-acid biosynthesis; L-proline biosynthesis; L-glutamate 5-semialdehyde from L-glutamate: step 1/2. Catalyzes the transfer of a phosphate group to glutamate to form L-glutamate 5-phosphate. This Syntrophus aciditrophicus (strain SB) protein is Glutamate 5-kinase.